A 635-amino-acid polypeptide reads, in one-letter code: Ligand-gated ion channel 4 (635 aa).

The signal sequence occupies residues 1–24 (MIICYSCLTVSILLTIKFVPCRFA). At 25–324 (GIEHQNTKSR…IHMHRRPLFY (300 aa)) the chain is on the extracellular side. N46, N139, N177, and N225 each carry an N-linked (GlcNAc...) asparagine glycan. C238 and C252 form a disulfide bridge. N282 carries an N-linked (GlcNAc...) asparagine glycan. 3 helical membrane-spanning segments follow: residues 325–345 (VFNH…GFLM), 355–375 (MIIT…ESIP), and 381–401 (VPLI…ATCV). The Cytoplasmic segment spans residues 402–599 (NVITLNMHRN…QQLASVVDRL (198 aa)). The chain crosses the membrane as a helical span at residues 600–620 (LLCLFCTATLFTIICLLIVPV). N625 carries N-linked (GlcNAc...) asparagine glycosylation.

It belongs to the ligand-gated ion channel (TC 1.A.9) family.

Its subcellular location is the postsynaptic cell membrane. The protein resides in the cell membrane. Functionally, possible acetylcholine receptor. In Caenorhabditis elegans, this protein is Ligand-gated ion channel 4 (lgc-4).